Reading from the N-terminus, the 210-residue chain is Thymidylate kinase (210 aa).

10–17 is a binding site for ATP; sequence GPEGAGKS.

This sequence belongs to the thymidylate kinase family.

It catalyses the reaction dTMP + ATP = dTDP + ADP. Its function is as follows. Phosphorylation of dTMP to form dTDP in both de novo and salvage pathways of dTTP synthesis. The polypeptide is Thymidylate kinase (Pseudomonas putida (strain ATCC 700007 / DSM 6899 / JCM 31910 / BCRC 17059 / LMG 24140 / F1)).